We begin with the raw amino-acid sequence, 142 residues long: Putative pre-16S rRNA nuclease (142 aa).

It belongs to the YqgF nuclease family.

The protein resides in the cytoplasm. Its function is as follows. Could be a nuclease involved in processing of the 5'-end of pre-16S rRNA. The protein is Putative pre-16S rRNA nuclease of Staphylococcus carnosus (strain TM300).